The primary structure comprises 179 residues: Ribosome-recycling factor (179 aa).

It belongs to the RRF family.

It localises to the cytoplasm. In terms of biological role, responsible for the release of ribosomes from messenger RNA at the termination of protein biosynthesis. May increase the efficiency of translation by recycling ribosomes from one round of translation to another. The sequence is that of Ribosome-recycling factor from Chlamydia muridarum (strain MoPn / Nigg).